Here is a 609-residue protein sequence, read N- to C-terminus: Transcription factor ntnD (609 aa).

The zn(2)-C6 fungal-type DNA-binding region spans Met-1 to Cys-7. The tract at residues Phe-46–Gln-104 is disordered. Positions Glu-51 to Glu-84 are enriched in polar residues. The segment covering Pro-85 to Gln-97 has biased composition (low complexity).

It belongs to the TRI10 transcription regulator family.

The protein resides in the nucleus. Functionally, transcription factor; part of the gene cluster that mediates the biosynthesis of meroterpenoids. This is Transcription factor ntnD from Nectria sp.